A 585-amino-acid chain; its full sequence is Frizzled-5 (585 aa).

The N-terminal stretch at Met1–Ala26 is a signal peptide. Residues Ala27–Trp238 are Extracellular-facing. The FZ domain maps to Ser28 to Tyr150. Cystine bridges form between Cys33-Cys94, Cys41-Cys87, Cys78-Cys116, Cys105-Cys147, and Cys109-Cys133. An N-linked (GlcNAc...) asparagine glycan is attached at Asn47. An N-linked (GlcNAc...) asparagine glycan is attached at Asn151. Residues Thr156–Gly179 are disordered. Residues Pro159–Ala175 are compositionally biased toward pro residues. The chain crosses the membrane as a helical span at residues Ile239–Ile259. Topologically, residues Asp260–Pro270 are cytoplasmic. The chain crosses the membrane as a helical span at residues Ile271–Val291. Residues Gly292–Cys315 are Extracellular-facing. A helical transmembrane segment spans residues Thr316–Leu336. Topologically, residues Ser337–Gln358 are cytoplasmic. A helical membrane pass occupies residues Tyr359–Ser379. The Extracellular segment spans residues Ser380–Gly402. Residues Phe403–Phe423 traverse the membrane as a helical segment. The Cytoplasmic portion of the chain corresponds to Val424–Arg449. The chain crosses the membrane as a helical span at residues Ile450–Tyr470. Residues Glu471–Tyr500 lie on the Extracellular side of the membrane. Residues Trp501–Ile521 traverse the membrane as a helical segment. The Cytoplasmic segment spans residues Trp522–Val585. Positions Lys525–Trp530 match the Lys-Thr-X-X-X-Trp motif, mediates interaction with the PDZ domain of Dvl family members motif. The PDZ-binding motif lies at Ser583–Val585.

The protein belongs to the G-protein coupled receptor Fz/Smo family. Binding of unsaturated fatty acid molecules (via FZ domain) promotes homodimerization. Interacts with WNT2B. Interacts with WNT3A. Interacts with WNT7A. Interacts with GOPC. Ubiquitinated by RNF43 and ZNRF3, leading to its degradation by the proteasome.

The protein resides in the cell membrane. It is found in the golgi apparatus membrane. The protein localises to the synapse. Its subcellular location is the perikaryon. It localises to the cell projection. The protein resides in the dendrite. It is found in the axon. Functionally, receptor for Wnt proteins. Functions in the canonical Wnt/beta-catenin signaling pathway. In vitro activates WNT2, WNT10B, WNT5A, but not WNT2B or WNT4 signaling. In neurons, activation by WNT7A promotes formation of synapses. May be involved in transduction and intercellular transmission of polarity information during tissue morphogenesis and/or in differentiated tissues. Plays a role in yolk sac angiogenesis and in placental vascularization. Plays a role in ocular development. The protein is Frizzled-5 (FZD5) of Homo sapiens (Human).